A 163-amino-acid chain; its full sequence is NADH-quinone oxidoreductase subunit I (163 aa).

4Fe-4S ferredoxin-type domains follow at residues 54 to 84 and 94 to 123; these read LRRY…IDSH and TRYD…LTRL. Positions 64, 67, 70, 74, 103, 106, 109, and 113 each coordinate [4Fe-4S] cluster.

This sequence belongs to the complex I 23 kDa subunit family. As to quaternary structure, NDH-1 is composed of 14 different subunits. Subunits NuoA, H, J, K, L, M, N constitute the membrane sector of the complex. [4Fe-4S] cluster is required as a cofactor.

The protein localises to the cell inner membrane. The catalysed reaction is a quinone + NADH + 5 H(+)(in) = a quinol + NAD(+) + 4 H(+)(out). In terms of biological role, NDH-1 shuttles electrons from NADH, via FMN and iron-sulfur (Fe-S) centers, to quinones in the respiratory chain. The immediate electron acceptor for the enzyme in this species is believed to be ubiquinone. Couples the redox reaction to proton translocation (for every two electrons transferred, four hydrogen ions are translocated across the cytoplasmic membrane), and thus conserves the redox energy in a proton gradient. This Halorhodospira halophila (strain DSM 244 / SL1) (Ectothiorhodospira halophila (strain DSM 244 / SL1)) protein is NADH-quinone oxidoreductase subunit I.